Reading from the N-terminus, the 762-residue chain is 5-methyltetrahydropteroyltriglutamate--homocysteine methyltransferase (762 aa).

5-methyltetrahydropteroyltri-L-glutamate is bound by residues 17 to 20 (REWK) and Lys111. L-homocysteine contacts are provided by residues 435–437 (IGS) and Glu488. L-methionine is bound by residues 435 to 437 (IGS) and Glu488. Residues 519 to 520 (RC) and Trp565 each bind 5-methyltetrahydropteroyltri-L-glutamate. Asp603 serves as a coordination point for L-homocysteine. Asp603 is a binding site for L-methionine. Glu609 contacts 5-methyltetrahydropteroyltri-L-glutamate. 3 residues coordinate Zn(2+): His645, Cys647, and Glu669. Catalysis depends on His698, which acts as the Proton donor. Cys730 lines the Zn(2+) pocket.

Belongs to the vitamin-B12 independent methionine synthase family. Zn(2+) serves as cofactor.

The catalysed reaction is 5-methyltetrahydropteroyltri-L-glutamate + L-homocysteine = tetrahydropteroyltri-L-glutamate + L-methionine. Its pathway is amino-acid biosynthesis; L-methionine biosynthesis via de novo pathway; L-methionine from L-homocysteine (MetE route): step 1/1. Catalyzes the transfer of a methyl group from 5-methyltetrahydrofolate to homocysteine resulting in methionine formation. The chain is 5-methyltetrahydropteroyltriglutamate--homocysteine methyltransferase from Bacillus thuringiensis subsp. konkukian (strain 97-27).